The primary structure comprises 348 residues: Ion-translocating oxidoreductase complex subunit D (348 aa).

5 helical membrane passes run 15-35, 36-56, 67-87, 88-108, and 125-145; these read LTAK…GMQA, YFFG…AVAI, PTAF…LAIS, IPPY…LLLA, and VAYA…LVPI. At Thr-186 the chain carries FMN phosphoryl threonine. The next 5 helical transmembrane spans lie at 212 to 232, 241 to 261, 265 to 285, 298 to 318, and 320 to 340; these read LFAN…LLLI, IPAA…LLLP, LNVV…FIAT, LIFG…GNYP, and AVAF…HYTQ.

Belongs to the NqrB/RnfD family. The complex is composed of six subunits: RnfA, RnfB, RnfC, RnfD, RnfE and RnfG. It depends on FMN as a cofactor.

It localises to the cell inner membrane. In terms of biological role, part of a membrane-bound complex that couples electron transfer with translocation of ions across the membrane. This chain is Ion-translocating oxidoreductase complex subunit D, found in Actinobacillus pleuropneumoniae serotype 5b (strain L20).